Consider the following 2213-residue polypeptide: Protein sidekick-1 (2213 aa).

The interval 1 to 73 (MARGARPSAA…GAGRCGGRRA (73 aa)) is disordered. Over residues 23–38 (AGPGRPRGSPPGRARP) the composition is skewed to low complexity. 5 Ig-like C2-type domains span residues 104-186 (PYFK…SEVQ), 191-277 (GSFM…SPFI), 293-378 (PTIV…RATA), 386-476 (PYFT…LDVT), and 480-569 (PVFT…ATLT). Cys126 and Cys169 form a disulfide bridge. N-linked (GlcNAc...) asparagine glycosylation is found at Asn271 and Asn301. Disulfide bonds link Cys315/Cys362, Cys408/Cys458, and Cys501/Cys553. Asn550, Asn563, and Asn572 each carry an N-linked (GlcNAc...) asparagine glycan. Residues 574 to 663 (TSIVHPPEDH…GNDSRMARLE (90 aa)) form the Ig-like C2-type 6 domain. A disulfide bridge links Cys595 with Cys647. Residues Asn655, Asn679, Asn782, Asn821, Asn882, Asn1015, and Asn1024 are each glycosylated (N-linked (GlcNAc...) asparagine). Fibronectin type-III domains follow at residues 670–766 (SPQN…LPEE), 771–867 (PPKN…TLQG), 872–970 (PPQN…TQED), 974–1068 (AVGH…VPPD), 1072–1171 (APSN…TLQA), 1176–1274 (APTS…TRES), 1279–1376 (APEN…TKDD), 1380–1474 (PPVR…TEKR), 1479–1576 (PPRE…TLQD), 1581–1699 (PPGS…VGEA), 1704–1800 (APQN…THQA), 1804–1899 (APSF…AGPA), and 1902–2000 (SPGS…SAQV). Asn1282 and Asn1333 each carry an N-linked (GlcNAc...) asparagine glycan. N-linked (GlcNAc...) asparagine glycosylation is found at Asn1654, Asn1748, Asn1767, Asn1819, and Asn1893. Residues 2010–2030 (FLLVMALSSLIVILLVVFALV) form a helical membrane-spanning segment. Residues 2031 to 2213 (LHGQNKKYKN…TPLTGFSSFV (183 aa)) lie on the Cytoplasmic side of the membrane. The tract at residues 2075–2098 (STFSKKNGTRSPPRPSPGGLHYSD) is disordered. The PDZ-binding motif lies at 2207–2213 (TGFSSFV).

This sequence belongs to the sidekick family. Homodimer; mediates homophilic interactions to promote cell adhesion. In terms of tissue distribution, up-regulated in glomeruli in HIV-associated nephropathy. In diseased glomeruli, significantly overexpressed and the expression is no longer restricted to mesangial cells but includes podocytes and parietal epithelial cells.

It localises to the cell membrane. The protein localises to the synapse. Functionally, adhesion molecule that promotes lamina-specific synaptic connections in the retina. Expressed in specific subsets of interneurons and retinal ganglion cells (RGCs) and promotes synaptic connectivity via homophilic interactions. The protein is Protein sidekick-1 of Homo sapiens (Human).